Reading from the N-terminus, the 207-residue chain is MVIVVDHPLVQHKLTKLRDKNTGPKEFRELLFEISSLMLYEVTKNLPTKEVEVETPLGIAKGKVLDNKDLAIVPILRAGLVMADGMLQILPSAKVGHIGLYRDPETLKPVQYYTKLPEDIDKREVIVVDPMLATGGSAVAAISILKAKGVKDIKFVCIISAPEGIETLRNSHPDVDIYTAAIDERLNDHGYIIPGLGDAGDRLFGTK.

5-phospho-alpha-D-ribose 1-diphosphate-binding positions include arginine 77, arginine 102, and 129–137 (DPMLATGGS). Residues isoleucine 192 and 197 to 199 (GDA) contribute to the uracil site. 5-phospho-alpha-D-ribose 1-diphosphate is bound at residue aspartate 198.

This sequence belongs to the UPRTase family. Mg(2+) is required as a cofactor.

It catalyses the reaction UMP + diphosphate = 5-phospho-alpha-D-ribose 1-diphosphate + uracil. Its pathway is pyrimidine metabolism; UMP biosynthesis via salvage pathway; UMP from uracil: step 1/1. Allosterically activated by GTP. Catalyzes the conversion of uracil and 5-phospho-alpha-D-ribose 1-diphosphate (PRPP) to UMP and diphosphate. The polypeptide is Uracil phosphoribosyltransferase (Dictyoglomus thermophilum (strain ATCC 35947 / DSM 3960 / H-6-12)).